The following is a 227-amino-acid chain: Cytochrome c oxidase subunit 2 (227 aa).

Residues 1-14 (MAHAAQVGLQDATS) lie on the Mitochondrial intermembrane side of the membrane. A helical transmembrane segment spans residues 15 to 45 (PIMEELIIFHDHALMIIFLICFLVLYALFLT). The Mitochondrial matrix segment spans residues 46-59 (LTTKLTNTSISDAQ). The helical transmembrane segment at 60-87 (EMETVWTILPAIILVLIALPSLRILYMT) threads the bilayer. At 88-227 (DEVNDPSFTI…IFEMGPVFTL (140 aa)) the chain is on the mitochondrial intermembrane side. Cu cation contacts are provided by His-161, Cys-196, Glu-198, Cys-200, His-204, and Met-207. Glu-198 serves as a coordination point for Mg(2+).

Belongs to the cytochrome c oxidase subunit 2 family. As to quaternary structure, component of the cytochrome c oxidase (complex IV, CIV), a multisubunit enzyme composed of 14 subunits. The complex is composed of a catalytic core of 3 subunits MT-CO1, MT-CO2 and MT-CO3, encoded in the mitochondrial DNA, and 11 supernumerary subunits COX4I, COX5A, COX5B, COX6A, COX6B, COX6C, COX7A, COX7B, COX7C, COX8 and NDUFA4, which are encoded in the nuclear genome. The complex exists as a monomer or a dimer and forms supercomplexes (SCs) in the inner mitochondrial membrane with NADH-ubiquinone oxidoreductase (complex I, CI) and ubiquinol-cytochrome c oxidoreductase (cytochrome b-c1 complex, complex III, CIII), resulting in different assemblies (supercomplex SCI(1)III(2)IV(1) and megacomplex MCI(2)III(2)IV(2)). Found in a complex with TMEM177, COA6, COX18, COX20, SCO1 and SCO2. Interacts with TMEM177 in a COX20-dependent manner. Interacts with COX20. Interacts with COX16. Requires Cu cation as cofactor.

It localises to the mitochondrion inner membrane. It carries out the reaction 4 Fe(II)-[cytochrome c] + O2 + 8 H(+)(in) = 4 Fe(III)-[cytochrome c] + 2 H2O + 4 H(+)(out). Functionally, component of the cytochrome c oxidase, the last enzyme in the mitochondrial electron transport chain which drives oxidative phosphorylation. The respiratory chain contains 3 multisubunit complexes succinate dehydrogenase (complex II, CII), ubiquinol-cytochrome c oxidoreductase (cytochrome b-c1 complex, complex III, CIII) and cytochrome c oxidase (complex IV, CIV), that cooperate to transfer electrons derived from NADH and succinate to molecular oxygen, creating an electrochemical gradient over the inner membrane that drives transmembrane transport and the ATP synthase. Cytochrome c oxidase is the component of the respiratory chain that catalyzes the reduction of oxygen to water. Electrons originating from reduced cytochrome c in the intermembrane space (IMS) are transferred via the dinuclear copper A center (CU(A)) of subunit 2 and heme A of subunit 1 to the active site in subunit 1, a binuclear center (BNC) formed by heme A3 and copper B (CU(B)). The BNC reduces molecular oxygen to 2 water molecules using 4 electrons from cytochrome c in the IMS and 4 protons from the mitochondrial matrix. The protein is Cytochrome c oxidase subunit 2 (MT-CO2) of Pan troglodytes (Chimpanzee).